A 156-amino-acid chain; its full sequence is 6,7-dimethyl-8-ribityllumazine synthase (156 aa).

5-amino-6-(D-ribitylamino)uracil contacts are provided by residues Phe22, 57–59 (AYE), and 81–83 (TVI). 86 to 87 (GT) is a (2S)-2-hydroxy-3-oxobutyl phosphate binding site. His89 functions as the Proton donor in the catalytic mechanism. Phe114 serves as a coordination point for 5-amino-6-(D-ribitylamino)uracil. Arg128 is a binding site for (2S)-2-hydroxy-3-oxobutyl phosphate.

This sequence belongs to the DMRL synthase family. Forms an icosahedral capsid composed of 60 subunits, arranged as a dodecamer of pentamers.

The catalysed reaction is (2S)-2-hydroxy-3-oxobutyl phosphate + 5-amino-6-(D-ribitylamino)uracil = 6,7-dimethyl-8-(1-D-ribityl)lumazine + phosphate + 2 H2O + H(+). The protein operates within cofactor biosynthesis; riboflavin biosynthesis; riboflavin from 2-hydroxy-3-oxobutyl phosphate and 5-amino-6-(D-ribitylamino)uracil: step 1/2. Its function is as follows. Catalyzes the formation of 6,7-dimethyl-8-ribityllumazine by condensation of 5-amino-6-(D-ribitylamino)uracil with 3,4-dihydroxy-2-butanone 4-phosphate. This is the penultimate step in the biosynthesis of riboflavin. This Escherichia coli O45:K1 (strain S88 / ExPEC) protein is 6,7-dimethyl-8-ribityllumazine synthase.